We begin with the raw amino-acid sequence, 595 residues long: Leiomodin-1 (595 aa).

Disordered regions lie at residues 1-322 and 467-568; these read MSKV…KVKN and DKQR…QEKN. The residue at position 12 (Ser-12) is a Phosphoserine. A compositionally biased stretch (acidic residues) spans 27 to 40; sequence EEMEELEKELDVVD. Basic and acidic residues-rich tracts occupy residues 72 to 105, 117 to 127, 134 to 193, 201 to 224, 232 to 251, 259 to 289, 467 to 476, and 484 to 493; these read CEKE…EDKG, QDSDVGKEPKK, FSRD…EKTG, SRDK…KLTA, RQED…KPEV, RDSR…REKQ, DKQRQKRLQE, and SGEKKDRLEV. Position 85 is a phosphoserine (Ser-85). Ser-135 is subject to Phosphoserine. 8 tandem repeats follow at residues 165 to 180, 181 to 196, 197 to 212, 213 to 227, 228 to 243, 244 to 257, 258 to 273, and 274 to 288. The segment at 165–288 is 8 X approximate tandem repeats; the sequence is AAVDRKEAGK…VREEGKTREK (124 aa). 2 stretches are compositionally biased toward pro residues: residues 503–513 and 527–538; these read SPKPSPQPSPK and AAPPPPPPPLAP. Residues 503-522 form a 5 X 4 AA approximate tandem repeats region; the sequence is SPKPSPQPSPKSAPKNSPKK. The residue at position 550 (Ser-550) is a Phosphoserine. The region spanning 569–588 is the WH2 domain; it reads SRDQLLAAIRSSNLKQLKKV.

As to expression, detected in smooth muscle, in stomach and uterus, blood vessel wall, and in slow fibers in extraocular muscle, urinary bladder and sternothyroid muscle (at protein level).

It localises to the cytoplasm. Its subcellular location is the myofibril. It is found in the sarcomere. The protein resides in the cytoskeleton. In terms of biological role, required for proper contractility of visceral smooth muscle cells. Mediates nucleation of actin filaments. This Rattus norvegicus (Rat) protein is Leiomodin-1.